Reading from the N-terminus, the 317-residue chain is Melanocyte-stimulating hormone receptor (317 aa).

The Extracellular portion of the chain corresponds to 1–37 (MAVQGFQRRLLGSLNSTPTAIPQLGLAANQTGARCLE). Asn29 is a glycosylation site (N-linked (GlcNAc...) asparagine). Residues 38–63 (VSIPDGLFLSLGLVSLVENVLVVATI) form a helical membrane-spanning segment. Residues 64–72 (AKNRNLHSP) lie on the Cytoplasmic side of the membrane. A helical membrane pass occupies residues 73–93 (TYCFICCLALSDLLVSGGNVL). Residues 94 to 118 (ETVVILLLEASALAARAAVVQPLDN) are Extracellular-facing. The chain crosses the membrane as a helical span at residues 119–140 (VIDVITCSSMVSSLCFLGAIAM). Over 141-163 (DRYVSIFYALRYHSIVTLPRARQ) the chain is Cytoplasmic. A helical transmembrane segment spans residues 164-183 (AIAAIWVASVLFSTLFIAYY). The Extracellular portion of the chain corresponds to 184–191 (DHAAVLLC). Residues 192–211 (LVVFFLAMLVLMAVLYVHML) traverse the membrane as a helical segment. The Cytoplasmic segment spans residues 212–240 (ARACQHAQGIARLHKRQRPLHQGFGLKGA). A helical transmembrane segment spans residues 241-266 (VTLTILLGIFFLCWGPFFLHLTLIVL). Over 267-279 (CPQHPTCSCIFKN) the chain is Extracellular. Residues 280 to 300 (FNLFLTLIICNAIIDPLIYAF) form a helical membrane-spanning segment. Over 301–317 (RRQELRRTLKEGLTCSW) the chain is Cytoplasmic. Cys315 is lipidated: S-palmitoyl cysteine.

This sequence belongs to the G-protein coupled receptor 1 family. As to quaternary structure, interacts with MGRN1, but does not undergo MGRN1-mediated ubiquitination; this interaction competes with GNAS-binding and thus inhibits agonist-induced cAMP production. Interacts with OPN3; the interaction results in a decrease in MC1R-mediated cAMP signaling and ultimately a decrease in melanin production in melanocytes.

The protein resides in the cell membrane. Receptor for MSH (alpha, beta and gamma) and ACTH. The activity of this receptor is mediated by G proteins which activate adenylate cyclase. Mediates melanogenesis, the production of eumelanin (black/brown) and phaeomelanin (red/yellow), via regulation of cAMP signaling in melanocytes. The sequence is that of Melanocyte-stimulating hormone receptor (MC1R) from Hylobates lar (Lar gibbon).